Reading from the N-terminus, the 449-residue chain is Tripartite motif-containing protein 64B (449 aa).

The segment at Cys-15–Arg-56 adopts an RING-type zinc-finger fold. The B box-type zinc finger occupies Ser-87–Ile-128. Residues Cys-92, His-95, Cys-114, and His-120 each contribute to the Zn(2+) site. The stretch at Leu-189–Met-225 forms a coiled coil. Residues Glu-268 to Thr-449 form the B30.2/SPRY domain.

This sequence belongs to the TRIM/RBCC family.

The polypeptide is Tripartite motif-containing protein 64B (TRIM64B) (Homo sapiens (Human)).